We begin with the raw amino-acid sequence, 92 residues long: Putative transition state regulator Abh (92 aa).

One can recognise a SpoVT-AbrB domain in the interval 5 to 50 (GVVRKVDELGRIVMPIELRRALDIAIKDSIEFFVDGDKIILKKYKP).

To B.subtilis AbrB and SpoVT.

This Bacillus subtilis (strain 168) protein is Putative transition state regulator Abh (abh).